Reading from the N-terminus, the 156-residue chain is uncharacterized protein (156 aa).

The protein resides in the mitochondrion. This is an uncharacterized protein from Paramecium tetraurelia.